We begin with the raw amino-acid sequence, 251 residues long: Tropomyosin-2 (251 aa).

Positions 1–251 (MSGEEKLGKL…DTVADEPDDE (251 aa)) form a coiled coil.

It belongs to the tropomyosin family. In terms of assembly, homodimer. Striated muscle specific.

This is Tropomyosin-2 (TPM2) from Podocoryna carnea (Hydrozoan).